Consider the following 323-residue polypeptide: tRNA U34 carboxymethyltransferase (323 aa).

Carboxy-S-adenosyl-L-methionine is bound by residues Lys-91, Trp-105, Lys-110, Gly-130, Ile-180–Glu-181, Met-196, Tyr-200, and Arg-315.

This sequence belongs to the class I-like SAM-binding methyltransferase superfamily. CmoB family. Homotetramer.

It catalyses the reaction carboxy-S-adenosyl-L-methionine + 5-hydroxyuridine(34) in tRNA = 5-carboxymethoxyuridine(34) in tRNA + S-adenosyl-L-homocysteine + H(+). Functionally, catalyzes carboxymethyl transfer from carboxy-S-adenosyl-L-methionine (Cx-SAM) to 5-hydroxyuridine (ho5U) to form 5-carboxymethoxyuridine (cmo5U) at position 34 in tRNAs. The chain is tRNA U34 carboxymethyltransferase from Geobacter sp. (strain M21).